Reading from the N-terminus, the 102-residue chain is RNA-binding protein Hfq (102 aa).

Positions 9–68 constitute a Sm domain; sequence DPFLNALRRERVPVSIYLVNGIKLQGQIESFDQFVILLKNTVSQMVYKHAISTVVPSRPV. A disordered region spans residues 64–102; it reads PSRPVSHHSNTPSGGTSNYHHGNNPSAPQQPQQESDDAE. The segment covering 70-96 has biased composition (polar residues); it reads HHSNTPSGGTSNYHHGNNPSAPQQPQQ.

Belongs to the Hfq family. As to quaternary structure, homohexamer.

Functionally, RNA chaperone that binds small regulatory RNA (sRNAs) and mRNAs to facilitate mRNA translational regulation in response to envelope stress, environmental stress and changes in metabolite concentrations. Also binds with high specificity to tRNAs. In Serratia proteamaculans (strain 568), this protein is RNA-binding protein Hfq.